Reading from the N-terminus, the 214-residue chain is MALSYYSLLLLLLAVWAPALTLVMAGDPDILTDYVIPANGNPMNITGDFFTFTGFRKVFNTSSAPEPNSFTVTKATMAEFPALNGQSVSYATLVFPPSTVNPPHTHPRSAELLLVVDGALSVGFIDTTNKLYTQDLAAGDMFVFPKGMVHFQFNSGNQPAMALSAFGSAAPGVVPVPVTVFGTGIDDAVLAKSFKTDVPTILKLKANLTPPNKS.

An N-terminal signal peptide occupies residues Met-1–Ala-25. N-linked (GlcNAc...) asparagine glycans are attached at residues Asn-44 and Asn-60. The region spanning Arg-56 to Leu-202 is the Cupin type-1 domain. Mn(2+)-binding residues include His-104, His-106, Glu-111, and His-150.

The protein belongs to the germin family. As to quaternary structure, oligomer (believed to be a pentamer but probably hexamer).

It localises to the secreted. It is found in the extracellular space. The protein resides in the apoplast. May play a role in plant defense. Probably has no oxalate oxidase activity even if the active site is conserved. The sequence is that of Putative germin-like protein 9-2 from Oryza sativa subsp. japonica (Rice).